The chain runs to 890 residues: Leucine-rich repeat receptor-like tyrosine-protein kinase PXC3 (890 aa).

A signal peptide spans 1–23 (MTFWCMSILLIVGFLSKSELCEA). Residues 24–534 (QLSDEATLVA…LRYNHRVSYR (511 aa)) are Extracellular-facing. Residues Asn-46, Asn-61, Asn-78, and Asn-108 are each glycosylated (N-linked (GlcNAc...) asparagine). 18 LRR repeats span residues 67–85 (MLDLSGLQLRGNVTLISDL), 86–108 (RSLKHLDLSGNNFNGRIPTSFGN), 110–132 (SELEFLDLSLNRFVGAIPVEFGK), 133–157 (LRGLRAFNISNNLLVGEIPDELKVL), 159–181 (RLEEFQVSGNGLNGSIPHWVGNL), 182–205 (SSLRVFTAYENDLVGEIPNGLGLV), 206–229 (SELELLNLHSNQLEGKIPKGIFEK), 231–254 (KLKVLVLTQNRLTGELPEAVGICS), 256–276 (LSSIRIGNNELVGVIPRTIGN), 278–300 (SGLTYFEADKNNLSGEIVAEFSK), 301–325 (CSNLTLLNLAANGFAGTIPTELGQL), 326–349 (INLQELILSGNSLFGEIPKSFLGS), 350–373 (GNLNKLDLSNNRLNGTIPKELCSM), 375–397 (RLQYLLLDQNSIRGDIPHEIGNC), 399–421 (KLLQLQLGRNYLTGTIPPEIGRM), 422–446 (RNLQIALNLSFNHLHGSLPPELGKL), 447–469 (DKLVSLDVSNNLLTGSIPPLLKG), and 471–492 (MSLIEVNFSNNLLNGPVPVFVP). N-linked (GlcNAc...) asparagine glycans are attached at residues Asn-140, Asn-171, and Asn-180. Residues Asn-276, Asn-289, and Asn-303 are each glycosylated (N-linked (GlcNAc...) asparagine). N-linked (GlcNAc...) asparagine glycosylation is present at Asn-363. Asn-429 carries N-linked (GlcNAc...) asparagine glycosylation. N-linked (GlcNAc...) asparagine glycosylation is found at Asn-477 and Asn-498. A helical membrane pass occupies residues 535–555 (IVLAVIGSGVAVFVSVTVVVL). Residues 556–890 (LFMMREKQEK…EMLQEVKQIK (335 aa)) are Cytoplasmic-facing. Positions 608–886 (MKESNKLSTG…KKVVEMLQEV (279 aa)) constitute a Protein kinase domain. Residues 614-622 (LSTGTFSSV) and Lys-636 contribute to the ATP site. Asp-735 acts as the Proton acceptor in catalysis.

This sequence belongs to the protein kinase superfamily. Tyr protein kinase family. In terms of tissue distribution, expressed in the vascular strands of cotyledons, the shoot apex, hypocotyls, roots, leaves, stems and flowers.

It localises to the cell membrane. It carries out the reaction L-tyrosyl-[protein] + ATP = O-phospho-L-tyrosyl-[protein] + ADP + H(+). Functionally, leucine-rich repeat receptor-like protein kinase that may play a role in vascular tissues development. This is Leucine-rich repeat receptor-like tyrosine-protein kinase PXC3 from Arabidopsis thaliana (Mouse-ear cress).